The sequence spans 462 residues: dTDP-4-dehydro-2,6-dideoxy-D-glucose 3-dehydratase (462 aa).

Pyridoxal 5'-phosphate contacts are provided by residues 112–113 (GS), aspartate 220, and serine 241. Catalysis depends on histidine 246, which acts as the Proton donor/acceptor. Asparagine 314 serves as a coordination point for pyridoxal 5'-phosphate.

It belongs to the DegT/DnrJ/EryC1 family. Homodimer. The cofactor is pyridoxal 5'-phosphate.

The enzyme catalyses dTDP-4-dehydro-2,6-dideoxy-alpha-D-glucose + 2 reduced [2Fe-2S]-[ferredoxin] + 2 H(+) = dTDP-4-dehydro-2,3,6-trideoxy-alpha-D-hexopyranose + 2 oxidized [2Fe-2S]-[ferredoxin] + H2O. Its function is as follows. Involved in the biosynthesis of forosamine ((4-dimethylamino)-2,3,4,6-tetradeoxy-alpha-D-threo-hexopyranose), a highly deoxygenated sugar component of several bioactive natural products such as the insecticidal spinosyns A and D. Catalyzes C-3 deoxygenation of dTDP-4-keto-2,6-dideoxy-alpha-D-glucose to yield dTDP-4-keto-2,3,6-trideoxy-D-glucose via a combined transamination-deoxygenation reaction. The catalysis is initiated by a transamination step in which pyridoxal 5'-phosphate (PLP) is converted to pyridoxamine 5'-phosphate (PMP) in the presence of L-glutamate. This coenzyme then forms a Schiff base with dTDP-4-keto-2,6-dideoxy-alpha-D-glucose and the resulting adduct undergoes a PMP-mediated beta-dehydration reaction to give a sugar enamine intermediate, which after a 2 electrons reduction and hydrolysis yields dTDP-4-keto-2,3,6-trideoxy-D-glucose as a product. Requires cellular reductase (ferredoxin or flavodoxin reductase) rather than a specific partner reductase. L-glutamate is 20-fold more efficient than L-aspartate as an amino donor. In the absence of an electron source and in the presence of L-glutamate, catalyzes a transamination reaction, converting dTDP-4-keto-2,6-dideoxy-alpha-D-glucose to dTDP-4-amino-2,4,6-trideoxy-D-glucose. The sequence is that of dTDP-4-dehydro-2,6-dideoxy-D-glucose 3-dehydratase from Saccharopolyspora spinosa.